Consider the following 823-residue polypeptide: Nuclear pore complex protein Nup93-1 (823 aa).

This sequence belongs to the nucleoporin interacting component (NIC) family. Part of the nuclear pore complex (NPC). Interacts with msk (via C-terminus); this association might be facilitated by Nup75. Interacts with Mad (preferentially when phosphorylated). Interacts with Nup154 (via N-terminus). Interacts with the Polycomb group (PcG) proteins Pc and E(z).

Its subcellular location is the nucleus membrane. It is found in the nucleus. The protein localises to the nuclear pore complex. The protein resides in the nucleoplasm. Its function is as follows. Required for nuclear pore complex assembly, maintenance and function. Required for nuclear import of phosphorylated Mad via importin msk. Has no role in classical nuclear localization signal (cNLS)-dependent nuclear import via importin-beta. Mediates the association between the nuclear pore complex and a subclass of silenced regions bound by Polycomb group (PcG) proteins, enables long-range interactions between Polycomb loci and contributes to repression of polycomb targets. Together with Nup62 and Nup154, contributes to karyosome morphology and chromatin organization including attachment to the nuclear envelope in oocytes and nurse cells. This chain is Nuclear pore complex protein Nup93-1, found in Drosophila melanogaster (Fruit fly).